The sequence spans 197 residues: dCTP deaminase (197 aa).

DCTP is bound by residues R110–R115, D128, V136–E138, Y171, and Q182. E138 acts as the Proton donor/acceptor in catalysis.

It belongs to the dCTP deaminase family. In terms of assembly, homotrimer.

It catalyses the reaction dCTP + H2O + H(+) = dUTP + NH4(+). Its pathway is pyrimidine metabolism; dUMP biosynthesis; dUMP from dCTP (dUTP route): step 1/2. Catalyzes the deamination of dCTP to dUTP. The protein is dCTP deaminase of Alteromonas mediterranea (strain DSM 17117 / CIP 110805 / LMG 28347 / Deep ecotype).